A 927-amino-acid polypeptide reads, in one-letter code: Protein unc-45 homolog B (927 aa).

3 TPR repeats span residues 4–37 (PVQLKEEGNKYFQSNDYGNAIECYSKALKLITDK), 41–74 (AVLYRNRSACYLKQENYIQAAADASKAIDVDASD), and 76–108 (KALFRRCQALEKLGKLDQAYKDVQRCATLEPKN). 3 ARM repeats span residues 167–206 (DAGAERIFQNNGVNLLMQLIETKDPELILSAVRTLSGMCT), 209–248 (RARATAIVHLVGINKICSIMAVDHEEIALAACNLLQNIVD), and 746–785 (DKLRQKIVKEKALPEIENYMFENHEQIRQAATECMCNLAV).

It localises to the cytoplasm. The protein localises to the myofibril. It is found in the sarcomere. The protein resides in the z line. Its subcellular location is the a band. It localises to the perinuclear region. The protein localises to the cytosol. In terms of biological role, acts as a co-chaperone for HSP90 and is required for proper folding of the myosin motor domain. Plays a role in sarcomere formation during muscle cell assembly. Is necessary for normal early lens development. The polypeptide is Protein unc-45 homolog B (Xenopus laevis (African clawed frog)).